Reading from the N-terminus, the 409-residue chain is Immediate early response gene 5-like protein (409 aa).

Disordered regions lie at residues 168–237 (QPPH…PSSS) and 312–335 (GQEEEDDEEEDAGDLGAEPPGGTP). Pro residues predominate over residues 184–195 (QPGPAPLPPPAP). Low complexity-rich tracts occupy residues 196 to 212 (AALCPRDPRVPAACSAP) and 220 to 237 (PPTVAASSPPASPAPSSS). The span at 313 to 324 (QEEEDDEEEDAG) shows a compositional bias: acidic residues.

The protein belongs to the IER family.

This Rattus norvegicus (Rat) protein is Immediate early response gene 5-like protein (Ier5l).